The sequence spans 73 residues: RNA-binding protein Hfq (73 aa).

In terms of domain architecture, Sm spans 8 to 68 (DQFLNQIRKD…ISTFAPQKNV (61 aa)).

It belongs to the Hfq family. As to quaternary structure, homohexamer.

In terms of biological role, RNA chaperone that binds small regulatory RNA (sRNAs) and mRNAs to facilitate mRNA translational regulation in response to envelope stress, environmental stress and changes in metabolite concentrations. Also binds with high specificity to tRNAs. In Bacillus velezensis (strain DSM 23117 / BGSC 10A6 / LMG 26770 / FZB42) (Bacillus amyloliquefaciens subsp. plantarum), this protein is RNA-binding protein Hfq.